We begin with the raw amino-acid sequence, 156 residues long: Small ribosomal subunit protein uS7 (156 aa).

Belongs to the universal ribosomal protein uS7 family. As to quaternary structure, part of the 30S ribosomal subunit. Contacts proteins S9 and S11.

Functionally, one of the primary rRNA binding proteins, it binds directly to 16S rRNA where it nucleates assembly of the head domain of the 30S subunit. Is located at the subunit interface close to the decoding center, probably blocks exit of the E-site tRNA. The sequence is that of Small ribosomal subunit protein uS7 from Pseudoalteromonas translucida (strain TAC 125).